The primary structure comprises 299 residues: Acetylglutamate kinase (299 aa).

Substrate contacts are provided by residues 72–73 (GG), R94, and N196.

It belongs to the acetylglutamate kinase family. ArgB subfamily.

Its subcellular location is the cytoplasm. It catalyses the reaction N-acetyl-L-glutamate + ATP = N-acetyl-L-glutamyl 5-phosphate + ADP. It functions in the pathway amino-acid biosynthesis; L-arginine biosynthesis; N(2)-acetyl-L-ornithine from L-glutamate: step 2/4. Functionally, catalyzes the ATP-dependent phosphorylation of N-acetyl-L-glutamate. In Burkholderia vietnamiensis (strain G4 / LMG 22486) (Burkholderia cepacia (strain R1808)), this protein is Acetylglutamate kinase.